A 439-amino-acid chain; its full sequence is tRNA modification GTPase MnmE (439 aa).

(6S)-5-formyl-5,6,7,8-tetrahydrofolate contacts are provided by Arg23, Glu80, and Lys120. In terms of domain architecture, TrmE-type G spans 217–365 (GLKIVIAGEP…LLTALQSHLP (149 aa)). Residue Asn227 participates in K(+) binding. GTP is bound by residues 227-232 (NAGKSS), 246-252 (TEVAGTT), and 271-274 (DTAG). A Mg(2+)-binding site is contributed by Ser231. Positions 246, 248, and 251 each coordinate K(+). Thr252 serves as a coordination point for Mg(2+). Position 439 (Lys439) interacts with (6S)-5-formyl-5,6,7,8-tetrahydrofolate.

This sequence belongs to the TRAFAC class TrmE-Era-EngA-EngB-Septin-like GTPase superfamily. TrmE GTPase family. In terms of assembly, homodimer. Heterotetramer of two MnmE and two MnmG subunits. Requires K(+) as cofactor.

The protein resides in the cytoplasm. Exhibits a very high intrinsic GTPase hydrolysis rate. Involved in the addition of a carboxymethylaminomethyl (cmnm) group at the wobble position (U34) of certain tRNAs, forming tRNA-cmnm(5)s(2)U34. This Rhizobium meliloti (strain 1021) (Ensifer meliloti) protein is tRNA modification GTPase MnmE.